A 995-amino-acid chain; its full sequence is S1 RNA-binding domain-containing protein 1 (995 aa).

Residues 23–78 are disordered; it reads SFSELSSASEEDDKEDSAWEPQKKVPRSRKQPPPKESKPKRMPQVKKNAPQISDGS. A Glycyl lysine isopeptide (Lys-Gly) (interchain with G-Cter in SUMO2) cross-link involves residue Lys-84. Over residues 116–132 the composition is skewed to basic residues; it reads TKRKCAAQPHAVRRTKK. The tract at residues 116–164 is disordered; the sequence is TKRKCAAQPHAVRRTKKLKVDEETSKASYLEGESNSSETPSTSTVWGGT. A Glycyl lysine isopeptide (Lys-Gly) (interchain with G-Cter in SUMO2) cross-link involves residue Lys-134. Residues 146–159 show a composition bias toward low complexity; the sequence is EGESNSSETPSTST. Glycyl lysine isopeptide (Lys-Gly) (interchain with G-Cter in SUMO2) cross-links involve residues Lys-166, Lys-167, and Lys-183. A Glycyl lysine isopeptide (Lys-Gly) (interchain with G-Cter in SUMO1); alternate cross-link involves residue Lys-185. A Glycyl lysine isopeptide (Lys-Gly) (interchain with G-Cter in SUMO2); alternate cross-link involves residue Lys-185. Residues 258–288 adopt a coiled-coil conformation; that stretch reads ADSLREVQQTLEELRAVAKKVHSTIQKIKKE. Ser-861 is subject to Phosphoserine. An S1 motif domain is found at 919–992; the sequence is GTVLTGKVEN…PRSRITLDLI (74 aa). Lys-955 participates in a covalent cross-link: Glycyl lysine isopeptide (Lys-Gly) (interchain with G-Cter in SUMO2). A Phosphoserine modification is found at Ser-964.

The chain is S1 RNA-binding domain-containing protein 1 (SRBD1) from Pongo abelii (Sumatran orangutan).